The chain runs to 647 residues: DNA mismatch repair protein MutL (647 aa).

Belongs to the DNA mismatch repair MutL/HexB family.

This protein is involved in the repair of mismatches in DNA. It is required for dam-dependent methyl-directed DNA mismatch repair. May act as a 'molecular matchmaker', a protein that promotes the formation of a stable complex between two or more DNA-binding proteins in an ATP-dependent manner without itself being part of a final effector complex. This is DNA mismatch repair protein MutL from Bacillus thuringiensis (strain Al Hakam).